Reading from the N-terminus, the 209-residue chain is MTAKKRSASSTRWMQEHFDDHYVKLAQKRGLRSRAAFKLEELQEKDHLIKPGMTVVDLGAAPGGWSQVAVKLVGDRGKVIACDILPMDPIVGVDFLQGDFREDAVLNALLERVGDEKVDVVLSDMAPNMSGSDGVDQPRAMYLVELALDMCHQVLAPNGSFAVKVFQGEGFDEYMKAVREAFKVVKTRKPDSSRARSREVYLVATGYKL.

Residues G63, W65, D83, D99, and D124 each coordinate S-adenosyl-L-methionine. K164 (proton acceptor) is an active-site residue.

It belongs to the class I-like SAM-binding methyltransferase superfamily. RNA methyltransferase RlmE family.

Its subcellular location is the cytoplasm. It catalyses the reaction uridine(2552) in 23S rRNA + S-adenosyl-L-methionine = 2'-O-methyluridine(2552) in 23S rRNA + S-adenosyl-L-homocysteine + H(+). Its function is as follows. Specifically methylates the uridine in position 2552 of 23S rRNA at the 2'-O position of the ribose in the fully assembled 50S ribosomal subunit. The chain is Ribosomal RNA large subunit methyltransferase E from Shewanella amazonensis (strain ATCC BAA-1098 / SB2B).